Reading from the N-terminus, the 202-residue chain is ATP-dependent Clp protease proteolytic subunit (202 aa).

Ser106 (nucleophile) is an active-site residue. Residue His131 is part of the active site.

The protein belongs to the peptidase S14 family. As to quaternary structure, fourteen ClpP subunits assemble into 2 heptameric rings which stack back to back to give a disk-like structure with a central cavity, resembling the structure of eukaryotic proteasomes.

Its subcellular location is the cytoplasm. It carries out the reaction Hydrolysis of proteins to small peptides in the presence of ATP and magnesium. alpha-casein is the usual test substrate. In the absence of ATP, only oligopeptides shorter than five residues are hydrolyzed (such as succinyl-Leu-Tyr-|-NHMec, and Leu-Tyr-Leu-|-Tyr-Trp, in which cleavage of the -Tyr-|-Leu- and -Tyr-|-Trp bonds also occurs).. Cleaves peptides in various proteins in a process that requires ATP hydrolysis. Has a chymotrypsin-like activity. Plays a major role in the degradation of misfolded proteins. The sequence is that of ATP-dependent Clp protease proteolytic subunit from Shewanella sp. (strain ANA-3).